Consider the following 355-residue polypeptide: D-alanine--D-alanine ligase (355 aa).

The region spanning 143-350 (KTIFSNHKLP…IEQLVAKLVD (208 aa)) is the ATP-grasp domain. ATP is bound at residue 178–233 (LKKLKFPVFVKPSNSGSSLGISKVKNESEILLALEKAWGIDPRILIEEGLEVREIE). Residues Asp-303, Glu-317, and Asn-319 each contribute to the Mg(2+) site.

It belongs to the D-alanine--D-alanine ligase family. Mg(2+) serves as cofactor. Requires Mn(2+) as cofactor.

It localises to the cytoplasm. The enzyme catalyses 2 D-alanine + ATP = D-alanyl-D-alanine + ADP + phosphate + H(+). It participates in cell wall biogenesis; peptidoglycan biosynthesis. Cell wall formation. The polypeptide is D-alanine--D-alanine ligase (Prochlorococcus marinus (strain MIT 9301)).